The sequence spans 473 residues: Glucose-1-phosphate adenylyltransferase small subunit, chloroplastic/amyloplastic (473 aa).

The tract at residues 1 to 36 (MDVPLASKTFPSPSPSKREQCNIDGHKSSSKHADLN) is disordered. The span at 16–36 (SKREQCNIDGHKSSSKHADLN) shows a compositional bias: basic and acidic residues.

The protein belongs to the bacterial/plant glucose-1-phosphate adenylyltransferase family. Heterotetramer. In terms of tissue distribution, abundantly expressed in the whole grains, a slightly less abundant expression is seen in leaves, while a low level expression is seen in the roots. A greater expression is seen in the endosperm than in the embryo and pericarp layers.

It localises to the plastid. Its subcellular location is the chloroplast. It is found in the amyloplast. It catalyses the reaction alpha-D-glucose 1-phosphate + ATP + H(+) = ADP-alpha-D-glucose + diphosphate. It functions in the pathway glycan biosynthesis; starch biosynthesis. Insensitive to 3'phosphoglycerate and orthophosphate. In terms of biological role, this protein plays a role in synthesis of starch. It catalyzes the synthesis of the activated glycosyl donor, ADP-glucose from Glc-1-P and ATP. This is Glucose-1-phosphate adenylyltransferase small subunit, chloroplastic/amyloplastic (AGP-S) from Triticum aestivum (Wheat).